The following is a 178-amino-acid chain: Mediator of RNA polymerase II transcription subunit 28 (178 aa).

The tract at residues 1-44 (MAAPLGGMFSGQPPGPPQAPPGLPGQASLLQAAPGAPRPSSSTL) is disordered. Residues 13–23 (PPGPPQAPPGL) show a composition bias toward pro residues. The stretch at 109–145 (QVIKEDVSELRNELQRKDALVQKHLTKLRHWQQVLED) forms a coiled coil.

It belongs to the Mediator complex subunit 28 family. In terms of assembly, component of the Mediator complex, which is composed of MED1, MED4, MED6, MED7, MED8, MED9, MED10, MED11, MED12, MED13, MED13L, MED14, MED15, MED16, MED17, MED18, MED19, MED20, MED21, MED22, MED23, MED24, MED25, MED26, MED27, MED29, MED30, MED31, CCNC, CDK8 and CDC2L6/CDK11. The MED12, MED13, CCNC and CDK8 subunits form a distinct module termed the CDK8 module. Mediator containing the CDK8 module is less active than Mediator lacking this module in supporting transcriptional activation. Individual preparations of the Mediator complex lacking one or more distinct subunits have been variously termed ARC, CRSP, DRIP, PC2, SMCC and TRAP. Forms a ternary complex with NF2/merlin and GRB2. Binds to actin. In terms of tissue distribution, widely expressed. Highly expressed in vascular tissues such as placenta, testis and liver.

The protein localises to the nucleus. It localises to the cytoplasm. The protein resides in the membrane. Component of the Mediator complex, a coactivator involved in the regulated transcription of nearly all RNA polymerase II-dependent genes. Mediator functions as a bridge to convey information from gene-specific regulatory proteins to the basal RNA polymerase II transcription machinery. Mediator is recruited to promoters by direct interactions with regulatory proteins and serves as a scaffold for the assembly of a functional preinitiation complex with RNA polymerase II and the general transcription factors. May be part of a complex containing NF2/merlin that participates in cellular signaling to the actin cytoskeleton downstream of tyrosine kinase signaling pathways. The chain is Mediator of RNA polymerase II transcription subunit 28 (MED28) from Homo sapiens (Human).